Here is a 207-residue protein sequence, read N- to C-terminus: MSRYRGPRLRIIRRLQNLPGLTNKLVESKKNKVSGSDQSIQKKVSQYGIRLEAKQRLRFNYGLTERQLLNYVRIARCAKGSTGQILLQLLEMRLDNILFRLGFVPTIPSARQLINHRHILVNNRIVDVPSFHCKPKDIITIGSPKTYQSILTKRIESFAKDQVPEHLTLSLSEPKKPKGFVNYLINRESIGLKINELLVVEYYSRKA.

Residues 92–150 (MRLDNILFRLGFVPTIPSARQLINHRHILVNNRIVDVPSFHCKPKDIITIGSPKTYQSI) enclose the S4 RNA-binding domain.

The protein belongs to the universal ribosomal protein uS4 family. Part of the 30S ribosomal subunit. Contacts protein S5. The interaction surface between S4 and S5 is involved in control of translational fidelity.

The protein resides in the plastid. It is found in the chloroplast. Functionally, one of the primary rRNA binding proteins, it binds directly to 16S rRNA where it nucleates assembly of the body of the 30S subunit. In terms of biological role, with S5 and S12 plays an important role in translational accuracy. The sequence is that of Small ribosomal subunit protein uS4c (rps4) from Equisetum variegatum (Variegated horsetail).